Reading from the N-terminus, the 158-residue chain is Endoribonuclease YbeY (158 aa).

Zn(2+)-binding residues include His114, His118, and His124.

This sequence belongs to the endoribonuclease YbeY family. Zn(2+) is required as a cofactor.

It is found in the cytoplasm. Its function is as follows. Single strand-specific metallo-endoribonuclease involved in late-stage 70S ribosome quality control and in maturation of the 3' terminus of the 16S rRNA. The polypeptide is Endoribonuclease YbeY (Pasteurella multocida (strain Pm70)).